A 352-amino-acid polypeptide reads, in one-letter code: Photosystem II protein D1 (352 aa).

Thr2 bears the N-acetylthreonine mark. Thr2 is subject to Phosphothreonine. The next 3 helical transmembrane spans lie at 29-46 (YIGW…TATS), 118-133 (HFLL…EWEL), and 142-156 (WIAV…AATA). His118 is a chlorophyll a binding site. Tyr126 contributes to the pheophytin a binding site. [CaMn4O5] cluster-binding residues include Asp170 and Glu189. The helical transmembrane segment at 197–218 (FHMLGVAGVFGGSLFSAMHGSL) threads the bilayer. Residue His198 coordinates chlorophyll a. Residues His215 and 264–265 (SF) each bind a quinone. His215 lines the Fe cation pocket. His272 lines the Fe cation pocket. A helical transmembrane segment spans residues 274-288 (FLAAWPVVGIWFTAL). [CaMn4O5] cluster is bound by residues His332, Glu333, Asp342, and Ala344. The propeptide occupies 345 to 352 (SVEAPVVG).

It belongs to the reaction center PufL/M/PsbA/D family. In terms of assembly, PSII is composed of 1 copy each of membrane proteins PsbA, PsbB, PsbC, PsbD, PsbE, PsbF, PsbH, PsbI, PsbJ, PsbK, PsbL, PsbM, PsbT, PsbX, PsbY, PsbZ, Psb30/Ycf12, at least 3 peripheral proteins of the oxygen-evolving complex and a large number of cofactors. It forms dimeric complexes. Requires The D1/D2 heterodimer binds P680, chlorophylls that are the primary electron donor of PSII, and subsequent electron acceptors. It shares a non-heme iron and each subunit binds pheophytin, quinone, additional chlorophylls, carotenoids and lipids. D1 provides most of the ligands for the Mn4-Ca-O5 cluster of the oxygen-evolving complex (OEC). There is also a Cl(-1) ion associated with D1 and D2, which is required for oxygen evolution. The PSII complex binds additional chlorophylls, carotenoids and specific lipids. as cofactor. Tyr-161 forms a radical intermediate that is referred to as redox-active TyrZ, YZ or Y-Z. In terms of processing, C-terminally processed by CTPA; processing is essential to allow assembly of the oxygen-evolving complex and thus photosynthetic growth.

It is found in the plastid. It localises to the chloroplast thylakoid membrane. It catalyses the reaction 2 a plastoquinone + 4 hnu + 2 H2O = 2 a plastoquinol + O2. Its function is as follows. Photosystem II (PSII) is a light-driven water:plastoquinone oxidoreductase that uses light energy to abstract electrons from H(2)O, generating O(2) and a proton gradient subsequently used for ATP formation. It consists of a core antenna complex that captures photons, and an electron transfer chain that converts photonic excitation into a charge separation. The D1/D2 (PsbA/PsbD) reaction center heterodimer binds P680, the primary electron donor of PSII as well as several subsequent electron acceptors. The polypeptide is Photosystem II protein D1 (Zygnema circumcarinatum (Green alga)).